A 304-amino-acid polypeptide reads, in one-letter code: Recombination-associated protein RdgC (304 aa).

Belongs to the RdgC family.

The protein localises to the cytoplasm. It localises to the nucleoid. May be involved in recombination. The sequence is that of Recombination-associated protein RdgC from Shewanella sp. (strain MR-4).